We begin with the raw amino-acid sequence, 145 residues long: Protein SprT-like (145 aa).

A SprT-like domain is found at 4–140 (TNYVQEVSLA…VCGNCHGKLM (137 aa)). H64 contacts Zn(2+). Residue E65 is part of the active site. A Zn(2+)-binding site is contributed by H68.

Belongs to the SprT family. Zn(2+) is required as a cofactor.

The protein resides in the cytoplasm. This Streptococcus pyogenes serotype M3 (strain SSI-1) protein is Protein SprT-like.